The sequence spans 365 residues: Galactoside alpha-(1,2)-fucosyltransferase 1 (365 aa).

Residues 1–8 are Cytoplasmic-facing; sequence MWVPSRRH. A helical; Signal-anchor for type II membrane protein membrane pass occupies residues 9 to 28; the sequence is LCLTFLLVCVLAAIFFLNVY. Residues 29–365 are Lumenal-facing; sequence QDLFYSGLDL…LSPLQMLAGP (337 aa). Residues asparagine 65, asparagine 301, and asparagine 327 are each glycosylated (N-linked (GlcNAc...) asparagine).

This sequence belongs to the glycosyltransferase 11 family.

It is found in the golgi apparatus. It localises to the golgi stack membrane. It catalyses the reaction a beta-D-galactosyl-(1-&gt;4)-N-acetyl-beta-D-glucosaminyl derivative + GDP-beta-L-fucose = an alpha-L-Fuc-(1-&gt;2)-beta-D-Gal-(1-&gt;4)-beta-D-GlcNAc derivative + GDP + H(+). The enzyme catalyses a ganglioside GA1 + GDP-beta-L-fucose = a ganglioside Fuc-GA1 + GDP + H(+). The catalysed reaction is a beta-D-Gal-(1-&gt;3)-beta-D-GlcNAc-(1-&gt;3)-beta-D-Gal-(1-&gt;4)-beta-D-Glc-(1&lt;-&gt;1')-Cer(d18:1(4E)) + GDP-beta-L-fucose = alpha-L-fucosyl-(1-&gt;2)- beta-D-galactosyl-(1-&gt;3)-N-acetyl-beta-D-glucosaminyl-(1-&gt;3)-beta-D-galactosyl-(1-&gt;4)-beta-D-glucosyl-(1&lt;-&gt;1')-N-acylsphing-4-enine + GDP + H(+). It carries out the reaction a neolactoside nLc4Cer(d18:1(4E)) + GDP-beta-L-fucose = a neolactoside IV(2)-alpha-Fuc-nLc4Cer(d18:1(4E)) + GDP + H(+). It catalyses the reaction a ganglioside GM1 + GDP-beta-L-fucose = a ganglioside Fuc-GM1 + GDP + H(+). The enzyme catalyses beta-D-galactosyl-(1-&gt;3)-N-acetyl-D-galactosamine + GDP-beta-L-fucose = alpha-L-fucosyl-(1-&gt;2)-beta-D-galactosyl-(1-&gt;3)-N-acetyl-D-galactosamine + GDP + H(+). Its pathway is protein modification; protein glycosylation. Its function is as follows. Catalyzes the transfer of L-fucose, from a guanosine diphosphate-beta-L-fucose, to the terminal galactose residue of glycoconjugates through an alpha(1,2) linkage leading to H antigen synthesis that is an intermediate substrate in the synthesis of ABO blood group antigens. H antigen is essential for maturation of the glomerular layer of the main olfactory bulb, in cell migration and early cell-cell contacts during tumor associated angiogenesis. Preferentially fucosylates soluble lactose and to a lesser extent fucosylates glycolipids gangliosides GA1 and GM1a. The protein is Galactoside alpha-(1,2)-fucosyltransferase 1 of Sus scrofa (Pig).